The primary structure comprises 340 residues: 4-dimethylallyltryptophan N-methyltransferase easF (340 aa).

Belongs to the methyltransferase superfamily. As to quaternary structure, homodimer.

It catalyses the reaction 4-(3-methylbut-2-enyl)-L-tryptophan + S-adenosyl-L-methionine = 4-(3-methylbut-2-enyl)-L-abrine + S-adenosyl-L-homocysteine + H(+). Its pathway is alkaloid biosynthesis; ergot alkaloid biosynthesis. In terms of biological role, 4-dimethylallyltryptophan N-methyltransferase; part of the gene cluster that mediates the biosynthesis of fungal ergot alkaloid. DmaW catalyzes the first step of ergot alkaloid biosynthesis by condensing dimethylallyl diphosphate (DMAP) and tryptophan to form 4-dimethylallyl-L-tryptophan. The second step is catalyzed by the methyltransferase easF that methylates 4-dimethylallyl-L-tryptophan in the presence of S-adenosyl-L-methionine, resulting in the formation of 4-dimethylallyl-L-abrine. The catalase easC and the FAD-dependent oxidoreductase easE then transform 4-dimethylallyl-L-abrine to chanoclavine-I which is further oxidized by easD in the presence of NAD(+), resulting in the formation of chanoclavine-I aldehyde. Chanoclavine-I aldehyde is the precursor of ergoamides and ergopeptines in Clavicipitaceae, and clavine-type alcaloids such as fumiclavine in Trichocomaceae. However, the metabolites downstream of chanoclavine-I aldehyde in Arthrodermataceae have not been identified yet. This chain is 4-dimethylallyltryptophan N-methyltransferase easF, found in Arthroderma benhamiae (strain ATCC MYA-4681 / CBS 112371) (Trichophyton mentagrophytes).